The sequence spans 181 residues: MDIIRQLEAEQAAKIEAKRKLPEFQPGDTVRVQVRVTEGTRTRVQAYEGVVIARAGSGFQENFTVRKISYGEGVERVFPVFSPMVEGVEIVRRGKVRRAKLYYLRDRRGKSARISENTGVRARKLNDEERDALNAEKARIEAEKVAAAQALAAETAAKEAAEKKAAAEAEAAKAAEATPAE.

Residues 162–173 (EKKAAAEAEAAK) show a composition bias toward basic and acidic residues. The segment at 162–181 (EKKAAAEAEAAKAAEATPAE) is disordered.

Belongs to the bacterial ribosomal protein bL19 family.

Functionally, this protein is located at the 30S-50S ribosomal subunit interface and may play a role in the structure and function of the aminoacyl-tRNA binding site. The chain is Large ribosomal subunit protein bL19 from Mesorhizobium japonicum (strain LMG 29417 / CECT 9101 / MAFF 303099) (Mesorhizobium loti (strain MAFF 303099)).